Consider the following 222-residue polypeptide: Phosphoribosylformylglycinamidine synthase subunit PurQ (222 aa).

In terms of domain architecture, Glutamine amidotransferase type-1 spans 2–222 (RTAVIQFPGS…FESLKGALVQ (221 aa)). Catalysis depends on cysteine 87, which acts as the Nucleophile. Catalysis depends on residues histidine 195 and glutamate 197.

In terms of assembly, part of the FGAM synthase complex composed of 1 PurL, 1 PurQ and 2 PurS subunits.

Its subcellular location is the cytoplasm. It catalyses the reaction N(2)-formyl-N(1)-(5-phospho-beta-D-ribosyl)glycinamide + L-glutamine + ATP + H2O = 2-formamido-N(1)-(5-O-phospho-beta-D-ribosyl)acetamidine + L-glutamate + ADP + phosphate + H(+). It carries out the reaction L-glutamine + H2O = L-glutamate + NH4(+). Its pathway is purine metabolism; IMP biosynthesis via de novo pathway; 5-amino-1-(5-phospho-D-ribosyl)imidazole from N(2)-formyl-N(1)-(5-phospho-D-ribosyl)glycinamide: step 1/2. In terms of biological role, part of the phosphoribosylformylglycinamidine synthase complex involved in the purines biosynthetic pathway. Catalyzes the ATP-dependent conversion of formylglycinamide ribonucleotide (FGAR) and glutamine to yield formylglycinamidine ribonucleotide (FGAM) and glutamate. The FGAM synthase complex is composed of three subunits. PurQ produces an ammonia molecule by converting glutamine to glutamate. PurL transfers the ammonia molecule to FGAR to form FGAM in an ATP-dependent manner. PurS interacts with PurQ and PurL and is thought to assist in the transfer of the ammonia molecule from PurQ to PurL. In Deinococcus geothermalis (strain DSM 11300 / CIP 105573 / AG-3a), this protein is Phosphoribosylformylglycinamidine synthase subunit PurQ.